The sequence spans 235 residues: MESNSNSNETMYGNPNINMGFVDSGNSNIGNNTGSMSPPPQQQQQPQQASSTPAGSVGIGGLSFSLGANGISLEPSSISHRVNAITSKIKEFKQERMETTRDWRSFVGSRQQYGLPNIKDTTSRIKENVVYFQSNYLILFLCFSVFFIITNPFYLLLLGVLLFISVYLHNSTTLTDIQRKIAYGIQAFLSIYFLLYAGSSIFWLVGATCCITLLHASFHSPNSTDETNIKFGDGV.

Residues 1–17 are compositionally biased toward polar residues; that stretch reads MESNSNSNETMYGNPNI. Residues 1–55 form a disordered region; it reads MESNSNSNETMYGNPNINMGFVDSGNSNIGNNTGSMSPPPQQQQQPQQASSTPAG. Over residues 24-48 the composition is skewed to low complexity; that stretch reads SGNSNIGNNTGSMSPPPQQQQQPQQ. The next 2 membrane-spanning stretches (helical) occupy residues 144–164 and 187–207; these read SVFF…LLFI and AFLS…LVGA.

This sequence belongs to the PRA1 family.

It localises to the membrane. May act as a general Rab protein regulator. The polypeptide is PRA1 family protein 1 (prafA) (Dictyostelium discoideum (Social amoeba)).